We begin with the raw amino-acid sequence, 161 residues long: Putative 4-hydroxy-4-methyl-2-oxoglutarate aldolase (161 aa).

Substrate contacts are provided by residues 75–78 and Arg-97; that span reads GDQL. Asp-98 is a binding site for a divalent metal cation.

Belongs to the class II aldolase/RraA-like family. As to quaternary structure, homotrimer. Requires a divalent metal cation as cofactor.

The enzyme catalyses 4-hydroxy-4-methyl-2-oxoglutarate = 2 pyruvate. It catalyses the reaction oxaloacetate + H(+) = pyruvate + CO2. Functionally, catalyzes the aldol cleavage of 4-hydroxy-4-methyl-2-oxoglutarate (HMG) into 2 molecules of pyruvate. Also contains a secondary oxaloacetate (OAA) decarboxylase activity due to the common pyruvate enolate transition state formed following C-C bond cleavage in the retro-aldol and decarboxylation reactions. This chain is Putative 4-hydroxy-4-methyl-2-oxoglutarate aldolase, found in Vibrio cholerae serotype O1 (strain ATCC 39315 / El Tor Inaba N16961).